Consider the following 718-residue polypeptide: Receptor-like protein 36 (718 aa).

The N-terminal stretch at 1 to 26 (MIRSLSYCFLTIYFFLSILPLPNTIA) is a signal peptide. Residues 27–695 (CPTRLLCRSD…SESEDQLLNW (669 aa)) lie on the Extracellular side of the membrane. 18 LRR repeats span residues 70 to 94 (DAIL…IGNL), 95 to 118 (SHLT…IGNL), 120 to 141 (QLES…SFAN), 143 to 165 (TKLS…LANL), 166 to 188 (TSLS…DLSG), 189 to 213 (LHNL…LLMI), 214 to 238 (PSLV…TFSL), 239 to 261 (SRLR…SISK), 262 to 286 (LVNL…ISKV), 288 to 310 (NLTS…VWRS), 312 to 334 (KLDY…EVID), 335 to 359 (GASL…ICKV), 360 to 383 (KDLY…LKYS), 384 to 406 (TYFH…LFIK), 407 to 431 (DSQL…LINC), 433 to 454 (RIEF…WLGS), 455 to 480 (LPYL…AYLG), and 481 to 505 (FPSI…YFAN). An N-linked (GlcNAc...) asparagine glycan is attached at N93. 2 N-linked (GlcNAc...) asparagine glycosylation sites follow: N141 and N164. N199 is a glycosylation site (N-linked (GlcNAc...) asparagine). N-linked (GlcNAc...) asparagine glycosylation is present at N288. N-linked (GlcNAc...) asparagine glycosylation is found at N373 and N393. N-linked (GlcNAc...) asparagine glycosylation occurs at N528. 4 LRR repeats span residues 550–574 (FEGF…IGLL), 575–598 (SELR…LANI), 599–622 (TNLE…LGKL), and 624–647 (FLSN…QFAT). N581, N597, N610, N629, and N649 each carry an N-linked (GlcNAc...) asparagine glycan. The helical transmembrane segment at 696–716 (IAAAIAFGPGMFCGLVIGHIF) threads the bilayer. Residues 717 to 718 (TS) are Cytoplasmic-facing.

It belongs to the RLP family.

It is found in the cell membrane. The protein is Receptor-like protein 36 of Arabidopsis thaliana (Mouse-ear cress).